A 526-amino-acid chain; its full sequence is Zinc finger protein Helios (526 aa).

The interval 28–94 (DLTSSTPNGQ…IESSEVADNR (67 aa)) is disordered. Residues 29 to 50 (LTSSTPNGQHASPSHMTSTNSV) show a composition bias toward polar residues. A Phosphoserine modification is found at Ser56. The segment covering 61 to 77 (DRQPLSREDEIRGHDEG) has biased composition (basic and acidic residues). A phosphoserine mark is found at Ser78 and Ser79. Lys95 is covalently cross-linked (Glycyl lysine isopeptide (Lys-Gly) (interchain with G-Cter in SUMO2)). 4 C2H2-type zinc fingers span residues 112–134 (LKCD…KRSH), 140–162 (FHCN…IKLH), 168–190 (FKCP…LRTH), and 196–219 (HKCN…ERCH). Lys288 is modified (N6-acetyllysine). Over residues 368–379 (ISRETSDSHENN) the composition is skewed to basic and acidic residues. Positions 368 to 435 (ISRETSDSHE…LNPKRKQSPA (68 aa)) are disordered. Residues Lys442 and Lys448 each participate in a glycyl lysine isopeptide (Lys-Gly) (interchain with G-Cter in SUMO2) cross-link. 2 C2H2-type zinc fingers span residues 471–493 (FKCE…MGCH) and 499–523 (LECN…RGEH).

It belongs to the Ikaros C2H2-type zinc-finger protein family. Can form homodimers. Interacts with IKZF4 and IKZF5. Expressed in outer hair cells (OHC) of the organ of Corti. Abundant in thymus, low expression in bone marrow and brain and no detectable expression in spleen, liver, kidney or muscle. Expressed in T-cells.

The protein localises to the nucleus. Transcriptional regulator required for outer hair cells (OHC) maturation and, consequently, for hearing. The sequence is that of Zinc finger protein Helios (Ikzf2) from Mus musculus (Mouse).